Reading from the N-terminus, the 189-residue chain is Density-regulated protein homolog (189 aa).

The SUI1 domain maps to Ile105 to Trp172.

This sequence belongs to the DENR family. As to quaternary structure, interacts with MCTS1.

Regulates translation as part of a complex with MCTS1. Specifically required for translational re-initiation in mRNAs containing upstream open reading frames (uORFs). Not required for standard translational initiation. Regulates expression of a subset of gene products including mbc, InR and EcR. The protein is Density-regulated protein homolog of Drosophila melanogaster (Fruit fly).